The chain runs to 302 residues: MFKKNTTHLRQLESESIYIMREVMSDFQNPVMLYSIGKDSSVMLHLAKKSFYPGTIPFPLLHIDTGWKFKEMYIFRDHIASTSNIELIVHSHSKGKLLGLNPFENGGSKYTDIMKTEGLKEAINKYNFDAAFGGARRDEEKSRSKERIYSFRDSLHQWDPKKQRPELWWNYNGQINKGENIRVFPLSNWTELDIWQYIFLEKIEIVPLYFAAKRPVLERNGVLTVIDDSRMKIKSNEVIKEKMVRFRTLGCWPLTNAIESEARNVEDIIKETLIVKTSERTGRAIDYDQKSSMEFKKRQGYF.

This sequence belongs to the PAPS reductase family. CysD subfamily. As to quaternary structure, heterodimer composed of CysD, the smaller subunit, and CysN.

It catalyses the reaction sulfate + ATP + H(+) = adenosine 5'-phosphosulfate + diphosphate. It functions in the pathway sulfur metabolism; hydrogen sulfide biosynthesis; sulfite from sulfate: step 1/3. Its function is as follows. With CysN forms the ATP sulfurylase (ATPS) that catalyzes the adenylation of sulfate producing adenosine 5'-phosphosulfate (APS) and diphosphate, the first enzymatic step in sulfur assimilation pathway. APS synthesis involves the formation of a high-energy phosphoric-sulfuric acid anhydride bond driven by GTP hydrolysis by CysN coupled to ATP hydrolysis by CysD. The protein is Sulfate adenylyltransferase subunit 2 of Buchnera aphidicola subsp. Acyrthosiphon pisum (strain 5A).